We begin with the raw amino-acid sequence, 252 residues long: Triosephosphate isomerase (252 aa).

Substrate is bound at residue 10-12 (NWK). The active-site Electrophile is histidine 96. Catalysis depends on glutamate 168, which acts as the Proton acceptor. Substrate contacts are provided by residues glycine 174, serine 214, and 235–236 (GG).

This sequence belongs to the triosephosphate isomerase family. As to quaternary structure, homodimer.

It is found in the cytoplasm. It catalyses the reaction D-glyceraldehyde 3-phosphate = dihydroxyacetone phosphate. It participates in carbohydrate biosynthesis; gluconeogenesis. Its pathway is carbohydrate degradation; glycolysis; D-glyceraldehyde 3-phosphate from glycerone phosphate: step 1/1. In terms of biological role, seems to be capable of enhancing bacteriocin synthesis. Functionally, involved in the gluconeogenesis. Catalyzes stereospecifically the conversion of dihydroxyacetone phosphate (DHAP) to D-glyceraldehyde-3-phosphate (G3P). This chain is Triosephosphate isomerase, found in Lactobacillus delbrueckii subsp. lactis.